The primary structure comprises 246 residues: Phycocyanobilin:ferredoxin oxidoreductase (246 aa).

It belongs to the HY2 family.

The enzyme catalyses (2R,3Z)-phycocyanobilin + 4 oxidized [2Fe-2S]-[ferredoxin] = biliverdin IXalpha + 4 reduced [2Fe-2S]-[ferredoxin] + 4 H(+). Its function is as follows. Catalyzes the four-electron reduction of biliverdin IX-alpha (2-electron reduction at both the A and D rings); the reaction proceeds via an isolatable 2-electron intermediate, 181,182-dihydrobiliverdin. The sequence is that of Phycocyanobilin:ferredoxin oxidoreductase from Synechococcus sp. (strain CC9902).